Reading from the N-terminus, the 639-residue chain is Bucky ball (639 aa).

Over residues 178-187 (ATKECKEDPV) the composition is skewed to basic and acidic residues. Disordered stretches follow at residues 178-205 (ATKE…SSQG), 218-242 (LDSS…EPQT), and 581-614 (RSWR…RSEY). The segment covering 189–205 (RPTTYSDSAYDAESSQG) has biased composition (polar residues). Over residues 225–240 (EEEEEEEKDVNEEDEP) the composition is skewed to acidic residues. Residues 584–593 (RQVTGPQDQG) are compositionally biased toward polar residues. Over residues 596–609 (PLRRSTCKSIHQQR) the composition is skewed to basic residues. A symmetric dimethylarginine mark is found at R627 and R629. 3 consecutive short sequence motifs (RG Motif) follow at residues 627–628 (RG), 629–630 (RG), and 635–636 (RG).

Specifically interacts (when methylated) with tdrd6 (via Tudor domain); interaction is responsible for recruitment of different protein complexes to germ plasm. Interacts with rbpms2 and dazl; interaction mediates Balbiani body formation. Interacts with kif5ba; interaction leads to buc enrichment at the embryonic cleavage furrows and mediates dorsoventral patterning. Post-translationally, symmetric dimethylarginine modification promotes interaction with tdrd6.

Its subcellular location is the cytoplasm. The protein resides in the cleavage furrow. Prion-like protein required for the formation of Balbiani body (electron-dense aggregates in the oocyte) and germ plasm assembly, and for the establishment of oocyte polarity during early oogenesis. Mobility and aggregation properties are improved by tudor domain-containing protein tdrd6 through interaction with dimethylated arginines Tri-RG domains. Establishes oocyte polarity through interactions with RNA-binding proteins rbpms2 and dazl, initiating a positive feedback loop amplification mechanism in the Balbiani body. Interaction of BUC protein and mRNA with rbpms2 and dazl is required to mediate Balbiani body formation. Involved in recruitment of germ plasm to embryonic cleavage furrows and dorsoventral patterning through interaction with Kinesin-1/KIF5BA. The sequence is that of Bucky ball from Danio rerio (Zebrafish).